The following is a 58-amino-acid chain: uncharacterized protein (58 aa).

Helical transmembrane passes span 7-27 (IFDI…VAKT) and 29-49 (YGTG…AYKI).

It localises to the cell membrane. This is an uncharacterized protein from Bacillus subtilis (strain 168).